The primary structure comprises 348 residues: Myricetin O-methyltransferase (348 aa).

The residue at position 1 (M1) is an N-acetylmethionine. S-adenosyl-L-methionine-binding residues include G189, D212, D232, M233, and K246. H250 acts as the Proton acceptor in catalysis.

Post-translationally, the N-terminus is blocked.

It catalyses the reaction S-adenosyl-L-methionine + a 3'-hydroxyflavonoid = S-adenosyl-L-homocysteine + a 3'-methoxyflavonoid.. The catalysed reaction is S-adenosyl-L-methionine + a 5'-hydroxy-3'-methoxyflavonoid = S-adenosyl-L-homocysteine + a 3',5'-dimethoxyflavonoid.. Its function is as follows. Methylates myricetin and dihydromyricetin at 2 sites. Inactive towards 16-hydroxytabersonine, the phenylpropanoids 5-hydroxyferulate, caffeate and their CoA-esters, flavones and flavanones possessing 2 or 3 B-ring hydroxyl groups. The protein is Myricetin O-methyltransferase of Catharanthus roseus (Madagascar periwinkle).